The following is a 137-amino-acid chain: Acidic phospholipase A2 beta-bungarotoxin A chain (137 aa).

The N-terminal stretch at 1 to 9 (AVCVSLLGA) is a signal peptide. The propeptide occupies 10–17 (ANIPPHPL). 6 cysteine pairs are disulfide-bonded: Cys44–Cys136, Cys46–Cys62, Cys61–Cys117, Cys68–Cys110, Cys78–Cys103, and Cys96–Cys108. Positions 45, 47, and 49 each coordinate Ca(2+). His65 is an active-site residue. Asp66 provides a ligand contact to Ca(2+). Asp111 is an active-site residue.

The protein belongs to the phospholipase A2 family. Group I subfamily. D49 sub-subfamily. As to quaternary structure, heterodimer; disulfide-linked. The A chain has phospholipase A2 activity and the B chain shows homology with the basic protease inhibitors. The cofactor is Ca(2+). Expressed by the venom gland.

It is found in the secreted. The catalysed reaction is a 1,2-diacyl-sn-glycero-3-phosphocholine + H2O = a 1-acyl-sn-glycero-3-phosphocholine + a fatty acid + H(+). Its function is as follows. Beta bungarotoxin is a presynaptic neurotoxin. The A chain has phospholipase activity. PLA2 catalyzes the calcium-dependent hydrolysis of the 2-acyl groups in 3-sn-phosphoglycerides. The sequence is that of Acidic phospholipase A2 beta-bungarotoxin A chain from Bungarus candidus (Malayan krait).